The primary structure comprises 265 residues: Serine protease ami (265 aa).

The N-terminal stretch at 1-21 (MNVSWALLAVVLVLTVATYEC) is a signal peptide. N2 carries N-linked (GlcNAc...) asparagine glycosylation. A propeptide spans 22-26 (RPRGR) (activation peptide). The Peptidase S1 domain occupies 27–254 (ILGGQDSKAE…YKSWIMESMY (228 aa)). C52 and C68 are joined by a disulfide. Residue H67 is the Charge relay system of the active site. N-linked (GlcNAc...) asparagine glycosylation is found at N71, N74, and N108. D115 serves as the catalytic Charge relay system. Cystine bridges form between C149–C215, C180–C196, and C205–C230. The active-site Charge relay system is the S209. N-linked (GlcNAc...) asparagine glycosylation occurs at N255.

It belongs to the peptidase S1 family.

Its subcellular location is the secreted. Its function is as follows. Probable serine protease. The protein is Serine protease ami of Xenopus tropicalis (Western clawed frog).